The following is a 67-amino-acid chain: Putative antitoxin PF1308 (67 aa).

The protein belongs to the UPF0165 family.

In terms of biological role, possibly the antitoxin component of a type II toxin-antitoxin (TA) system. The chain is Putative antitoxin PF1308 from Pyrococcus furiosus (strain ATCC 43587 / DSM 3638 / JCM 8422 / Vc1).